The primary structure comprises 602 residues: Glutamate-rich protein 6 (602 aa).

Residues 22–67 (LRPRLTSVSSPSLSSTPPPSPLSSPSWSEEELPAPRSDGSPASSIS) are disordered. Residues 25–36 (RLTSVSSPSLSS) are compositionally biased toward low complexity.

This sequence belongs to the ERICH6 family.

The protein localises to the nucleus. The protein is Glutamate-rich protein 6 (Erich6) of Rattus norvegicus (Rat).